The chain runs to 252 residues: Oil body-associated protein 2A (252 aa).

The tract at residues 1–31 is disordered; that stretch reads MASSDGKPLPTPASVGGGGGSSTAPPGQPTT. A compositionally biased stretch (low complexity) spans 22-31; it reads STAPPGQPTT.

Belongs to the OBAP family.

The polypeptide is Oil body-associated protein 2A (Zea mays (Maize)).